The sequence spans 1083 residues: Integrator complex subunit 3 homolog (1083 aa).

Disordered regions lie at residues 551–579 (NEAVFSDDENLPSTSKNEENTDDDDDLPL), 929–953 (YPSSSPNKRKRPSKGSSAASSTPSA), and 1014–1083 (AVGR…NDSD). Residues 942–953 (KGSSAASSTPSA) are compositionally biased toward low complexity. Phosphoserine is present on residues Ser-1053, Ser-1054, Ser-1058, and Ser-1059. Residues 1066-1077 (HKVTQPAKKRKK) show a composition bias toward basic residues.

This sequence belongs to the Integrator subunit 3 family. In terms of assembly, belongs to the multiprotein complex Integrator, at least composed of IntS1, IntS2, IntS3, IntS4, omd/IntS5, IntS6, defl/IntS7, IntS8, IntS9, IntS10, IntS11, IntS12, asun/IntS13, IntS14 and IntS15. The core complex associates with protein phosphatase 2A subunits mts/PP2A and Pp2A-29B, to form the Integrator-PP2A (INTAC) complex.

The protein localises to the nucleus. Its subcellular location is the cytoplasm. Component of the integrator complex, a multiprotein complex that terminates RNA polymerase II (Pol II) transcription in the promoter-proximal region of genes. The integrator complex provides a quality checkpoint during transcription elongation by driving premature transcription termination of transcripts that are unfavorably configured for transcriptional elongation: the complex terminates transcription by (1) catalyzing dephosphorylation of the C-terminal domain (CTD) of Pol II subunit Polr2A/Rbp1 and Spt5, and (2) degrading the exiting nascent RNA transcript via endonuclease activity. The integrator complex is also involved in the 3'-end processing of the U7 snRNA, and also the spliceosomal snRNAs U1, U2, U4 and U5. This is Integrator complex subunit 3 homolog (IntS3) from Drosophila grimshawi (Hawaiian fruit fly).